The primary structure comprises 684 residues: Early phosphoprotein p84 (684 aa).

5 disordered regions span residues 166–301 (LGGS…MSLP), 317–336 (SSAV…HHNA), 357–393 (VVSS…AAAT), 407–452 (RAPA…SPRF), and 569–657 (SNSS…GPSF). Residues 180 to 191 (EQQRRRQEQRHE) show a composition bias toward basic and acidic residues. Positions 201-220 (AGGGGGGGASGGGGGGGSGG) are enriched in gly residues. Composition is skewed to basic and acidic residues over residues 232 to 245 (RDPR…ERRP) and 258 to 272 (REAK…HEGH). The Nuclear localization signal motif lies at 261 to 264 (KRQK). The span at 285 to 296 (GGAGGGGGGGSG) shows a compositional bias: gly residues. Basic residues predominate over residues 326–335 (NHHHHHHHHN). Residues 359–377 (SSPSSTSPSSLLSLPRPSS) are compositionally biased toward low complexity. Polar residues predominate over residues 425-442 (STTPVSNCRVPPNSQESA). Residues 578-587 (PLPPPPPPPG) show a composition bias toward pro residues. Residues 598-608 (RGGGGGGGGGR) are compositionally biased toward gly residues. Over residues 612–622 (RQAASSSSSSS) the composition is skewed to low complexity.

Belongs to the herpesviridae U79/UL112 family. Isoforms 1, 2, 3 and 4 interacts with themselves and with each other via their shared N-terminal regions; these interactions are important to both their intranuclear targeting and the recruitment of UL44 to subnuclear sites for viral replication.

Its subcellular location is the host nucleus. The protein resides in the virion. In terms of biological role, needed for efficient replication. Recruits the DNA polymerase processivity factor to pre-replication foci. This is Early phosphoprotein p84 (UL112/UL113) from Homo sapiens (Human).